We begin with the raw amino-acid sequence, 423 residues long: Polyglutamylase complex subunit TTLL1 (423 aa).

One can recognise a TTL domain in the interval M1 to N367. Residues K138, Q144–G145, S181–I184, and K194–D196 each bind ATP. Q144 is a binding site for a protein. An L-glutamate-binding site is contributed by R220. An ATP-binding site is contributed by T241–N242. K259 provides a ligand contact to L-glutamate. 3 residues coordinate Mg(2+): D313, E326, and N328. K344 lines the L-glutamate pocket. Residues D390–K423 form a disordered region.

Belongs to the tubulin polyglutamylase family. As to quaternary structure, part of the neuronal tubulin polyglutamylase complex which contains TPGS1, TPGS2, TTLL1, LRRC49 and NICN1. Interacts with PCM1, CSTPP1 and LRRC49. Mg(2+) is required as a cofactor.

The protein localises to the cytoplasm. It is found in the cytoskeleton. Its subcellular location is the cilium basal body. It localises to the cilium axoneme. The protein resides in the cell projection. The protein localises to the cilium. It is found in the flagellum. The enzyme catalyses (L-glutamyl)(n)-gamma-L-glutamyl-L-glutamyl-[protein] + L-glutamate + ATP = (L-glutamyl)(n+1)-gamma-L-glutamyl-L-glutamyl-[protein] + ADP + phosphate + H(+). In terms of biological role, catalytic subunit of a polyglutamylase complex which modifies tubulin, generating side chains of glutamate on the gamma-carboxyl group of specific glutamate residues within the C-terminal tail of tubulin. Probably involved in the side-chain elongation step of the polyglutamylation reaction rather than the initiation step. Modifies both alpha- and beta-tubulins with a preference for the alpha-tail. Unlike most polyglutamylases of the tubulin--tyrosine ligase family, only displays a catalytic activity when in complex with other proteins as it is most likely lacking domains important for autonomous activity. Part of the neuronal tubulin polyglutamylase complex. Mediates cilia and flagella polyglutamylation which is essential for their biogenesis and motility. Involved in respiratory motile cilia function through the regulation of beating asymmetry. Essential for sperm flagella biogenesis, motility and male fertility. Involved in KLF4 glutamylation which impedes its ubiquitination, thereby leading to somatic cell reprogramming, pluripotency maintenance and embryogenesis. The chain is Polyglutamylase complex subunit TTLL1 (Ttll1) from Rattus norvegicus (Rat).